We begin with the raw amino-acid sequence, 417 residues long: Cysteate synthase (417 aa).

Lysine 102 carries the N6-(pyridoxal phosphate)lysine modification. 2 residues coordinate pyridoxal 5'-phosphate: asparagine 128 and threonine 380.

The protein belongs to the threonine synthase family. Cysteate synthase subfamily. As to quaternary structure, homotrimer. It depends on pyridoxal 5'-phosphate as a cofactor.

It carries out the reaction O-phospho-L-serine + sulfite + H(+) = L-cysteate + phosphate. It functions in the pathway cofactor biosynthesis; coenzyme M biosynthesis. Specifically catalyzes the beta-elimination of phosphate from L-phosphoserine and the beta-addition of sulfite to the dehydroalanine intermediate to produce L-cysteate. This chain is Cysteate synthase, found in Methanocella arvoryzae (strain DSM 22066 / NBRC 105507 / MRE50).